The primary structure comprises 424 residues: MSTIIDIHAREILDSRGNPTVEVDVILEDGTMGRAAVPSGASTGAYEAVERRDGDKTRYMGKGVLEACAAVNGEIADALVGLDATEQVDIDASMIELDGTANKSRLGANAILGVSLAAAKAAADYCTQPLYRYVGGTSARVLPVPMMNIINGGEHADNPIDIQEFMIMPVAADNIRDAVRMGSEVFHTLKKELSAAGLSTGIGDEGGFAPNINSTRDALDFILKSIEKAGYKPGEEIYLALDCAATEYFKNGKYELSGEGKSLTSEENVAYLAALVADYPIISIEDAMSEDDWDGWKALTDALGHKVQLVGDDLFVTNPERLATGIERGSANSMLVKVNQIGTLTETLKAVDMAHRAGFTNVMSHRSGETEDATIADLAVATNCGQIKTGSLARSDRLAKYNQLIRIEEALGETAEYAGRSILR.

Position 163 (Q163) interacts with (2R)-2-phosphoglycerate. E205 (proton donor) is an active-site residue. The Mg(2+) site is built by D242, E285, and D312. Residues K337, R366, S367, and K388 each coordinate (2R)-2-phosphoglycerate. The Proton acceptor role is filled by K337.

The protein belongs to the enolase family. It depends on Mg(2+) as a cofactor.

Its subcellular location is the cytoplasm. The protein localises to the secreted. It is found in the cell surface. It catalyses the reaction (2R)-2-phosphoglycerate = phosphoenolpyruvate + H2O. It participates in carbohydrate degradation; glycolysis; pyruvate from D-glyceraldehyde 3-phosphate: step 4/5. Functionally, catalyzes the reversible conversion of 2-phosphoglycerate (2-PG) into phosphoenolpyruvate (PEP). It is essential for the degradation of carbohydrates via glycolysis. This is Enolase from Roseobacter denitrificans (strain ATCC 33942 / OCh 114) (Erythrobacter sp. (strain OCh 114)).